A 147-amino-acid polypeptide reads, in one-letter code: Hemoglobin subunit epsilon (147 aa).

The Globin domain maps to 3 to 147 (HFTAEEKAAI…VAIALGHKYH (145 aa)). A phosphoserine mark is found at S14 and S51. Residues H64 and H93 each coordinate heme b.

This sequence belongs to the globin family. As to quaternary structure, heterotetramer of two alpha chains and two epsilon chains in early embryonic hemoglobin Gower-2; two zeta chains and two epsilon chains in early embryonic hemoglobin Gower-1. Red blood cells.

Functionally, the epsilon chain is a beta-type chain of early mammalian embryonic hemoglobin. The sequence is that of Hemoglobin subunit epsilon (HBE1) from Alouatta belzebul (Red-handed howler monkey).